The chain runs to 350 residues: S-adenosylmethionine:tRNA ribosyltransferase-isomerase (350 aa).

This sequence belongs to the QueA family. In terms of assembly, monomer.

It localises to the cytoplasm. The catalysed reaction is 7-aminomethyl-7-carbaguanosine(34) in tRNA + S-adenosyl-L-methionine = epoxyqueuosine(34) in tRNA + adenine + L-methionine + 2 H(+). It participates in tRNA modification; tRNA-queuosine biosynthesis. Its function is as follows. Transfers and isomerizes the ribose moiety from AdoMet to the 7-aminomethyl group of 7-deazaguanine (preQ1-tRNA) to give epoxyqueuosine (oQ-tRNA). In Vibrio parahaemolyticus serotype O3:K6 (strain RIMD 2210633), this protein is S-adenosylmethionine:tRNA ribosyltransferase-isomerase.